The sequence spans 422 residues: Mannose-1-phosphate guanylyltransferase regulatory subunit alpha-A (422 aa).

Residues 2 to 253 (LKAVILIGGP…DRFWSQIKSA (252 aa)) form a substrate-binding domain region. GDP-alpha-D-mannose-binding residues include Glu85 and Gln249. Residues 275–422 (LATNTEGGAK…NRSFKNQIIL (148 aa)) form a hexapeptide repeat domain region. Positions 358–386 (TPSDPNPNDPYAKIDSETLFRDGKLTPSI) are C-loop.

This sequence belongs to the transferase hexapeptide repeat family. Component of the GMPPA-GMPPB mannose-1-phosphate guanylyltransferase complex composed of 4 gmppa subunits and 8 gmppb subunits; the complex is organized into three layers, a central layer made up of 2 gmppa dimers sandwiched between two layers each made up of 2 gmppb dimers.

It participates in nucleotide-sugar biosynthesis; GDP-alpha-D-mannose biosynthesis; GDP-alpha-D-mannose from alpha-D-mannose 1-phosphate (GTP route): step 1/1. Functionally, regulatory subunit of the GMPPA-GMPPB mannose-1-phosphate guanylyltransferase complex; reduces the catalytic activity of GMPPB when part of the complex. Mediates allosteric feedback inhibition of GMPPB catalytic activity upon binding GDP-alpha-D-mannose. Together with GMPPB regulates GDP-alpha-D-mannose levels. One of two paralogs (gmppaa and gmppab) that may have redundant functions. The sequence is that of Mannose-1-phosphate guanylyltransferase regulatory subunit alpha-A (gmppaa) from Danio rerio (Zebrafish).